Reading from the N-terminus, the 136-residue chain is Large ribosomal subunit protein uL16 (136 aa).

It belongs to the universal ribosomal protein uL16 family. Part of the 50S ribosomal subunit.

Binds 23S rRNA and is also seen to make contacts with the A and possibly P site tRNAs. The chain is Large ribosomal subunit protein uL16 from Ehrlichia ruminantium (strain Gardel).